The primary structure comprises 362 residues: Flagellar P-ring protein (362 aa).

An N-terminal signal peptide occupies residues 1–15; that stretch reads MLAAALMSAAFGAHA.

The protein belongs to the FlgI family. As to quaternary structure, the basal body constitutes a major portion of the flagellar organelle and consists of four rings (L,P,S, and M) mounted on a central rod.

The protein resides in the periplasm. The protein localises to the bacterial flagellum basal body. Assembles around the rod to form the L-ring and probably protects the motor/basal body from shearing forces during rotation. This chain is Flagellar P-ring protein, found in Pseudomonas fluorescens (strain Pf0-1).